Consider the following 85-residue polypeptide: Small ribosomal subunit protein bS16 (85 aa).

It belongs to the bacterial ribosomal protein bS16 family.

The chain is Small ribosomal subunit protein bS16 from Xanthomonas euvesicatoria pv. vesicatoria (strain 85-10) (Xanthomonas campestris pv. vesicatoria).